The chain runs to 565 residues: NAD-dependent malic enzyme (565 aa).

Tyrosine 104 serves as the catalytic Proton donor. Arginine 157 contacts NAD(+). Catalysis depends on lysine 175, which acts as the Proton acceptor. The a divalent metal cation site is built by glutamate 246, aspartate 247, and aspartate 270. Residues aspartate 270 and asparagine 418 each contribute to the NAD(+) site.

The protein belongs to the malic enzymes family. Homotetramer. Mg(2+) serves as cofactor. The cofactor is Mn(2+).

The enzyme catalyses (S)-malate + NAD(+) = pyruvate + CO2 + NADH. The catalysed reaction is oxaloacetate + H(+) = pyruvate + CO2. In Escherichia coli O9:H4 (strain HS), this protein is NAD-dependent malic enzyme.